Reading from the N-terminus, the 486-residue chain is MPAPTTEIEPIEAQSLKKLSLKSLKRSLELFSPVHGQFPPPDPEAKQIRLSHKMKVAFGGVEPVVSQPPRQPDRINEQPGPSNALSLAAPEGSKSTQKGATESAIVVGPTLLRPILPKGLNYTGSSGKSTTIIPANVSSYQRNLSTAALMERIPSRWPRPEWHAPWKNYRVIQGHLGWVRSVAFDPSNEWFCTGSADRTIKIWDVATGVLKLTLTGHIEQVRGLAVSNRHTYMFSAGDDKQVKCWDLEQNKVIRSYHGHLSGVYCLALHPTLDVLLTGGRDSVCRVWDIRTKMQIFALSGHDNTVCSVFTRPTDPQVVTGSHDTTIKFWDLRYGKTMSTLTHHKKSVRAMTLHPKENAFASASADNTKKFSLPKGEFCHNMLSQQKTIINAMAVNEDGVMVTGGDNGSIWFWDWKSGHSFQQSETIVQPGSLESEAGIYAACYDNTGSRLVTCEADKTIKMWKEDENATPETHPINFKPPKEIRRF.

Positions 62-101 are disordered; it reads EPVVSQPPRQPDRINEQPGPSNALSLAAPEGSKSTQKGAT. WD repeat units follow at residues 174–204, 216–246, 258–288, 300–330, 342–371, 384–413, and 433–463; these read GHLG…KIWD, GHIE…KCWD, GHLS…RVWD, GHDN…KFWD, HHKK…KKFS, QQKT…WFWD, and ESEA…KMWK. 2 consecutive short sequence motifs (DWD box) follow at residues 275 to 290 and 317 to 332; these read LLTG…WDIR and VVTG…WDLR. The segment at 465–486 is disordered; that stretch reads DENATPETHPINFKPPKEIRRF.

This sequence belongs to the WD repeat PRL1/PRL2 family. As to quaternary structure, component of the multiprotein assembly MOS4-associated complex (MAC) at least composed of MOS4, CDC5, PRL1 and PRP19. Interacts with CDC5. Component of the CUL4-RBX1-DDB1-PRL1 E3 ubiquitin-protein ligase complex. Interacts with DDB1A through its DWD motif. Interacts with AKIN10, AKIN11 and PIPC. Interacts with KAP2.

It localises to the nucleus. It functions in the pathway protein modification; protein ubiquitination. Pleiotropic regulator of glucose, stress and hormone responses. Also regulates cytochrome P450 CYP90A1/CPD. Coordinates the expression of hormone- and stress-related genes and genes related to cell wall modification and growth, leading to altered sugar-dependent growth and developmental responses. Component of the MAC complex that probably regulates defense responses through transcriptional control and thereby is essential for plant innate immunity. By suppressing the expression of several (1)O(2)-responsive genes, PRL1 seems to play a major role in modulating responses of plants to environmental changes by interconnecting (1)O(2)-mediated retrograde signaling with other signaling pathways. Acts as a negative regulator of SNF1-related protein kinases AKIN10 and AKIN11 via the inhibition of their interaction with SKP1/ASK1. Component of the CUL4-RBX1-DDB1-PRL1 E3 ubiquitin-protein ligase complex, PRL1 may function as the substrate recognition module within this complex, leading to the AKIN10 degradation. In Arabidopsis thaliana (Mouse-ear cress), this protein is Protein pleiotropic regulatory locus 1 (PRL1).